The primary structure comprises 60 residues: Putative potassium channel blocker TXKS1 (60 aa).

A signal peptide spans 1–28 (MNRLTTIILMLIVINVIMDDISESKVAA). Cystine bridges form between Cys32-Cys49, Cys35-Cys55, and Cys39-Cys57. Residue Lys59 is modified to Lysine amide.

Expressed by the venom gland.

The protein localises to the secreted. Inhibits potassium channels. In Olivierus martensii (Manchurian scorpion), this protein is Putative potassium channel blocker TXKS1.